The primary structure comprises 453 residues: tRNA modification GTPase MnmE (453 aa).

Residues arginine 22, glutamate 79, and lysine 119 each contribute to the (6S)-5-formyl-5,6,7,8-tetrahydrofolate site. The region spanning 215 to 376 (GMKVVIAGRP…LRNHLKECMG (162 aa)) is the TrmE-type G domain. Residue asparagine 225 participates in K(+) binding. Residues 225–230 (NAGKSS), 244–250 (TDIAGTT), 269–272 (DTAG), and 334–337 (NKAD) each bind GTP. Serine 229 provides a ligand contact to Mg(2+). Positions 244, 246, and 249 each coordinate K(+). Threonine 250 lines the Mg(2+) pocket. Lysine 453 lines the (6S)-5-formyl-5,6,7,8-tetrahydrofolate pocket.

The protein belongs to the TRAFAC class TrmE-Era-EngA-EngB-Septin-like GTPase superfamily. TrmE GTPase family. As to quaternary structure, homodimer. Heterotetramer of two MnmE and two MnmG subunits. The cofactor is K(+).

The protein localises to the cytoplasm. Its function is as follows. Exhibits a very high intrinsic GTPase hydrolysis rate. Involved in the addition of a carboxymethylaminomethyl (cmnm) group at the wobble position (U34) of certain tRNAs, forming tRNA-cmnm(5)s(2)U34. This chain is tRNA modification GTPase MnmE, found in Vibrio parahaemolyticus serotype O3:K6 (strain RIMD 2210633).